A 172-amino-acid polypeptide reads, in one-letter code: NADH-quinone oxidoreductase subunit B (172 aa).

C46, C47, C111, and C141 together coordinate [4Fe-4S] cluster.

It belongs to the complex I 20 kDa subunit family. NDH-1 is composed of 14 different subunits. Subunits NuoB, C, D, E, F, and G constitute the peripheral sector of the complex. [4Fe-4S] cluster is required as a cofactor.

It localises to the cell membrane. It carries out the reaction a quinone + NADH + 5 H(+)(in) = a quinol + NAD(+) + 4 H(+)(out). Functionally, NDH-1 shuttles electrons from NADH, via FMN and iron-sulfur (Fe-S) centers, to quinones in the respiratory chain. The immediate electron acceptor for the enzyme in this species is believed to be a menaquinone. Couples the redox reaction to proton translocation (for every two electrons transferred, four hydrogen ions are translocated across the cytoplasmic membrane), and thus conserves the redox energy in a proton gradient. The protein is NADH-quinone oxidoreductase subunit B of Bacillus mycoides (strain KBAB4) (Bacillus weihenstephanensis).